Here is a 76-residue protein sequence, read N- to C-terminus: Small ribosomal subunit protein bS18 (76 aa).

This sequence belongs to the bacterial ribosomal protein bS18 family. Part of the 30S ribosomal subunit. Forms a tight heterodimer with protein bS6.

Functionally, binds as a heterodimer with protein bS6 to the central domain of the 16S rRNA, where it helps stabilize the platform of the 30S subunit. The sequence is that of Small ribosomal subunit protein bS18 from Ectopseudomonas mendocina (strain ymp) (Pseudomonas mendocina).